A 329-amino-acid polypeptide reads, in one-letter code: Probable fructokinase-2 (329 aa).

Belongs to the carbohydrate kinase PfkB family.

It catalyses the reaction D-fructose + ATP = D-fructose 6-phosphate + ADP + H(+). It participates in glycan biosynthesis; starch biosynthesis. May play an important role in maintaining the flux of carbon towards starch formation. The sequence is that of Probable fructokinase-2 from Arabidopsis thaliana (Mouse-ear cress).